Consider the following 445-residue polypeptide: GTPase Der (445 aa).

2 consecutive EngA-type G domains span residues 3-167 (PVIA…YAGQ) and 180-353 (VKIA…AAAM). Residues 9-16 (GRPNVGKS), 56-60 (DTGGF), 119-122 (NKAE), 186-193 (GRPNVGKS), 233-237 (DTAGL), and 298-301 (NKWD) each bind GTP. One can recognise a KH-like domain in the interval 354–438 (AKLPTPKLTR…PLRIEFRSST (85 aa)).

This sequence belongs to the TRAFAC class TrmE-Era-EngA-EngB-Septin-like GTPase superfamily. EngA (Der) GTPase family. Associates with the 50S ribosomal subunit.

In terms of biological role, GTPase that plays an essential role in the late steps of ribosome biogenesis. The chain is GTPase Der from Paraburkholderia phytofirmans (strain DSM 17436 / LMG 22146 / PsJN) (Burkholderia phytofirmans).